The chain runs to 106 residues: Probable glutaredoxin (106 aa).

Residues 8–106 (IVQKITGADP…AKYLDVQFTQ (99 aa)) form the Glutaredoxin domain. A disulfide bridge links Cys28 with Cys31.

Belongs to the glutaredoxin family.

Its subcellular location is the virion. In Acanthamoeba polyphaga mimivirus (APMV), this protein is Probable glutaredoxin.